Consider the following 277-residue polypeptide: Ribosomal RNA small subunit methyltransferase A (277 aa).

Residues asparagine 20, leucine 22, glycine 47, glutamate 68, aspartate 93, and asparagine 114 each coordinate S-adenosyl-L-methionine.

The protein belongs to the class I-like SAM-binding methyltransferase superfamily. rRNA adenine N(6)-methyltransferase family. RsmA subfamily.

It is found in the cytoplasm. It catalyses the reaction adenosine(1518)/adenosine(1519) in 16S rRNA + 4 S-adenosyl-L-methionine = N(6)-dimethyladenosine(1518)/N(6)-dimethyladenosine(1519) in 16S rRNA + 4 S-adenosyl-L-homocysteine + 4 H(+). Functionally, specifically dimethylates two adjacent adenosines (A1518 and A1519) in the loop of a conserved hairpin near the 3'-end of 16S rRNA in the 30S particle. May play a critical role in biogenesis of 30S subunits. The sequence is that of Ribosomal RNA small subunit methyltransferase A from Aliivibrio salmonicida (strain LFI1238) (Vibrio salmonicida (strain LFI1238)).